Reading from the N-terminus, the 173-residue chain is Glucagon family neuropeptides (173 aa).

An N-terminal signal peptide occupies residues 1–22; it reads MSSKATLALLIYGIIMHYSVYS. Positions 23–80 are excised as a propeptide; that stretch reads SPLGLNYPNLRLENEVYDEDGNSLPALAFDSDQIAIRSPPSVADDLYTLYYPPEKGTE. The residue at position 166 (lysine 166) is a Lysine amide. The propeptide occupies 170–173; it reads LGYL.

Belongs to the glucagon family.

It is found in the secreted. In terms of biological role, primary role of GHRH is to release GH from the pituitary. Functionally, PACAP plays pivotal roles as a neurotransmitter and/or a neuromodulator. The chain is Glucagon family neuropeptides from Oncorhynchus nerka (Sockeye salmon).